Reading from the N-terminus, the 432-residue chain is Glucose-6-phosphate isomerase (432 aa).

The Proton donor role is filled by Glu-283. Active-site residues include His-304 and Lys-418.

The protein belongs to the GPI family.

The protein localises to the cytoplasm. The enzyme catalyses alpha-D-glucose 6-phosphate = beta-D-fructose 6-phosphate. The protein operates within carbohydrate biosynthesis; gluconeogenesis. It functions in the pathway carbohydrate degradation; glycolysis; D-glyceraldehyde 3-phosphate and glycerone phosphate from D-glucose: step 2/4. Functionally, catalyzes the reversible isomerization of glucose-6-phosphate to fructose-6-phosphate. This Rubrobacter xylanophilus (strain DSM 9941 / JCM 11954 / NBRC 16129 / PRD-1) protein is Glucose-6-phosphate isomerase.